A 397-amino-acid chain; its full sequence is Protochlorophyllide reductase, chloroplastic (397 aa).

Residues 1–57 (MALTMSAKSVSARAQVSSKAQAAPAVAVSGRTSSRVMPAPALAARSSVARTPLVVCA) constitute a chloroplast transit peptide.

It belongs to the short-chain dehydrogenases/reductases (SDR) family. POR subfamily.

It localises to the plastid. Its subcellular location is the chloroplast. It carries out the reaction chlorophyllide a + NADP(+) = protochlorophyllide a + NADPH + H(+). It participates in porphyrin-containing compound metabolism; chlorophyll biosynthesis. Its function is as follows. Phototransformation of protochlorophyllide (Pchlide) to chlorophyllide (Chlide). This chain is Protochlorophyllide reductase, chloroplastic (PORA), found in Chlamydomonas reinhardtii (Chlamydomonas smithii).